Here is a 78-residue protein sequence, read N- to C-terminus: Pigment-dispersing hormone peptides (78 aa).

Residues methionine 1 to glycine 22 form the signal peptide. Position 75 is an alanine amide (alanine 75).

The protein belongs to the arthropod PDH family. In terms of tissue distribution, expressed in eyestalk tissue and cerebral ganglia.

Its subcellular location is the secreted. Functionally, the pigment-dispersing hormone causes the migration of the distal retinal pigment into the proximal end of the pigment chromatophore cells and thus decreases the amount of light entering the retinulas. May also function as a neurotransmitter and/or neuromodulator. The protein is Pigment-dispersing hormone peptides of Carcinus maenas (Common shore crab).